The chain runs to 210 residues: Glutathione S-transferase 2 (210 aa).

In terms of domain architecture, GST N-terminal spans 1–80 (MDFYYLPLSA…YLVEKYGKQN (80 aa)). Glutathione contacts are provided by residues serine 9, 50-52 (HTI), and 64-66 (ESR). In terms of domain architecture, GST C-terminal spans 87-208 (CPKKRALINQ…AGCLEMKKYF (122 aa)).

It belongs to the GST superfamily. Theta family. Homodimer.

It carries out the reaction RX + glutathione = an S-substituted glutathione + a halide anion + H(+). In terms of biological role, conjugation of reduced glutathione to a wide number of exogenous and endogenous hydrophobic electrophiles. This chain is Glutathione S-transferase 2 (Gst2), found in Musca domestica (House fly).